The following is an 899-amino-acid chain: Protein translocase subunit SecA (899 aa).

Residues Q87, 105–109, and D516 each bind ATP; that span reads GEGKT. Residues C884, C886, C895, and H896 each coordinate Zn(2+).

The protein belongs to the SecA family. In terms of assembly, monomer and homodimer. Part of the essential Sec protein translocation apparatus which comprises SecA, SecYEG and auxiliary proteins SecDF. Other proteins may also be involved. It depends on Zn(2+) as a cofactor.

The protein resides in the cell inner membrane. It is found in the cytoplasm. It catalyses the reaction ATP + H2O + cellular proteinSide 1 = ADP + phosphate + cellular proteinSide 2.. Part of the Sec protein translocase complex. Interacts with the SecYEG preprotein conducting channel. Has a central role in coupling the hydrolysis of ATP to the transfer of proteins into and across the cell membrane, serving as an ATP-driven molecular motor driving the stepwise translocation of polypeptide chains across the membrane. This Borreliella burgdorferi (strain ATCC 35210 / DSM 4680 / CIP 102532 / B31) (Borrelia burgdorferi) protein is Protein translocase subunit SecA.